The following is a 162-amino-acid chain: ATP synthase subunit b 1 (162 aa).

Residues 1 to 21 form a helical membrane-spanning segment; that stretch reads MLLTAEFWVAVAFVAFLVIVW.

The protein belongs to the ATPase B chain family. As to quaternary structure, F-type ATPases have 2 components, F(1) - the catalytic core - and F(0) - the membrane proton channel. F(1) has five subunits: alpha(3), beta(3), gamma(1), delta(1), epsilon(1). F(0) has three main subunits: a(1), b(2) and c(10-14). The alpha and beta chains form an alternating ring which encloses part of the gamma chain. F(1) is attached to F(0) by a central stalk formed by the gamma and epsilon chains, while a peripheral stalk is formed by the delta and b chains.

The protein resides in the cell inner membrane. In terms of biological role, f(1)F(0) ATP synthase produces ATP from ADP in the presence of a proton or sodium gradient. F-type ATPases consist of two structural domains, F(1) containing the extramembraneous catalytic core and F(0) containing the membrane proton channel, linked together by a central stalk and a peripheral stalk. During catalysis, ATP synthesis in the catalytic domain of F(1) is coupled via a rotary mechanism of the central stalk subunits to proton translocation. Component of the F(0) channel, it forms part of the peripheral stalk, linking F(1) to F(0). This is ATP synthase subunit b 1 from Methylorubrum extorquens (strain PA1) (Methylobacterium extorquens).